Reading from the N-terminus, the 394-residue chain is Cystathionine gamma-lyase (394 aa).

Residues K37–P56 form a disordered region. Residues R52, Y104, and R109 each coordinate substrate. Position 204 is an N6-(pyridoxal phosphate)lysine (K204). E334 contacts substrate. S362 is subject to Phosphoserine.

Belongs to the trans-sulfuration enzymes family. Homotetramer. The cofactor is pyridoxal 5'-phosphate.

Its subcellular location is the cytoplasm. The enzyme catalyses L,L-cystathionine + H2O = 2-oxobutanoate + L-cysteine + NH4(+). The protein operates within amino-acid biosynthesis; L-cysteine biosynthesis; L-cysteine from L-homocysteine and L-serine: step 2/2. Its function is as follows. Catalyzes the production of cysteine from cystathionine in the reverse transsulfuration pathway for the biosynthesis of sulfur-containing amino acids cysteine and methionine. In this pathway, homocysteine sulfur is converted to cysteine sulfur. Also has cystathionine beta-lyase and cystathionine gamma-synthase activities in vitro. Cystathionine beta-lyase may be physiological, while cystathionine gamma-synthase activity is not, as the required substrate O-succinyl-L-homoserine(OSH) does not occur naturally in S.cerevisiae. This chain is Cystathionine gamma-lyase, found in Saccharomyces cerevisiae (strain ATCC 204508 / S288c) (Baker's yeast).